The chain runs to 202 residues: MSYLGVGVSPGNVPVYHGTNLKVVDRRVRLAELVLRCVICGLGILAAVLVGTDTQVKVIFTIQKKAKFTDMKALVFLVIANGIAAAYSLIQGLRCVVSMVRGSVLFSKPLAWAIFSGDQVIAYLTLAAVAAAAQSSVFGEFGQPELQWMKICNMYGKFCNQVGEGIVSAVGVSLSMVILSGISAFSLFRLYGGNKGTSGGRW.

The Cytoplasmic segment spans residues 1-29 (MSYLGVGVSPGNVPVYHGTNLKVVDRRVR). The chain crosses the membrane as a helical span at residues 30 to 50 (LAELVLRCVICGLGILAAVLV). Residues 51-72 (GTDTQVKVIFTIQKKAKFTDMK) are Extracellular-facing. Residues 73–93 (ALVFLVIANGIAAAYSLIQGL) form a helical membrane-spanning segment. Over 94 to 109 (RCVVSMVRGSVLFSKP) the chain is Cytoplasmic. The helical transmembrane segment at 110–130 (LAWAIFSGDQVIAYLTLAAVA) threads the bilayer. Residues 131–164 (AAAQSSVFGEFGQPELQWMKICNMYGKFCNQVGE) are Extracellular-facing. Residues 165–185 (GIVSAVGVSLSMVILSGISAF) traverse the membrane as a helical segment. At 186–202 (SLFRLYGGNKGTSGGRW) the chain is on the cytoplasmic side.

This sequence belongs to the Casparian strip membrane proteins (CASP) family. Homodimer and heterodimers.

It is found in the cell membrane. This Vitis vinifera (Grape) protein is CASP-like protein 2B1.